A 722-amino-acid chain; its full sequence is Bifunctional UDP-N-acetylglucosamine 2-epimerase/N-acetylmannosamine kinase (722 aa).

Arg19, Ser23, Arg113, His220, and Asn253 together coordinate UDP. CMP-N-acetyl-beta-neuraminate is bound by residues Lys259, Glu271, Lys280, and His281. The UDP site is built by Val282, Ser301, Ser302, Glu307, and Arg321. Positions 406–722 (TLSALAVDLG…VLDYTTRRIY (317 aa)) are N-acetylmannosamine kinase. Mg(2+) is bound at residue Asp413. Position 416 (Gly416) interacts with an N-acyl-D-mannosamine 6-phosphate. Residues Thr417, Asn418, and Arg420 each contribute to the ADP site. The an N-acyl-D-mannosamine 6-phosphate site is built by Gly476, Arg477, Thr489, Asn516, Asp517, and Gly545. 5 residues coordinate an N-acyl-D-mannosamine: Gly476, Arg477, Thr489, Asn516, and Asp517. Residue Asp517 is part of the active site. An N-acyl-D-mannosamine contacts are provided by Glu566 and His569. His569 contacts an N-acyl-D-mannosamine 6-phosphate. Residues His569, Cys579, Cys581, and Cys586 each contribute to the Zn(2+) site. Position 588 (Glu588) interacts with an N-acyl-D-mannosamine 6-phosphate. Position 588 (Glu588) interacts with an N-acyl-D-mannosamine.

This sequence in the N-terminal section; belongs to the UDP-N-acetylglucosamine 2-epimerase family. In the C-terminal section; belongs to the ROK (NagC/XylR) family. In terms of assembly, homodimer. Homotetramer. Homohexamer. The hexameric form exhibits both enzyme activities, whereas the dimeric form only catalyzes the phosphorylation of N-acyl-D-mannosamine. In terms of processing, phosphorylated. Phosphorylation by PKC activates the UDP-N-acetylglucosamine 2-epimerase activity. In terms of tissue distribution, highest expression in liver and placenta. Also found in heart, brain, lung, kidney, skeletal muscle and pancreas. Isoform 1 is expressed in heart, brain, kidney, liver, placenta, lung, spleen, pancreas, skeletal muscle and colon. Isoform 2 is expressed mainly in placenta, but also in brain, kidney, liver, lung, pancreas and colon. Isoform 3 is expressed at low level in kidney, liver, placenta and colon.

The protein resides in the cytoplasm. It is found in the cytosol. It catalyses the reaction UDP-N-acetyl-alpha-D-glucosamine + H2O = aldehydo-N-acetyl-D-mannosamine + UDP + H(+). The enzyme catalyses an N-acyl-D-mannosamine + ATP = an N-acyl-D-mannosamine 6-phosphate + ADP + H(+). Its pathway is amino-sugar metabolism; N-acetylneuraminate biosynthesis. The UDP-N-acetylglucosamine 2-epimerase activity, in contrast to the N-acetylmannosamine kinase activity, exhibits allosteric regulation by cytidine monophosphate-N-acetylneuraminic acid (CMP-Neu5Ac), the end product of neuraminic acid biosynthesis. Moreover, the activity is contingent upon the oligomeric state of the enzyme. The monomeric form is inactive, while the dimeric form selectively catalyzes the phosphorylation of N-acetylmannosamine. The hexameric form, on the other hand, demonstrates full proficiency in both enzyme activities. Furthermore, the UDP-N-acetylglucosamine 2-epimerase activity is increased by PKC-mediated phosphorylation. In terms of biological role, bifunctional enzyme that possesses both UDP-N-acetylglucosamine 2-epimerase and N-acetylmannosamine kinase activities, and serves as the initiator of the biosynthetic pathway leading to the production of N-acetylneuraminic acid (NeuAc), a critical precursor in the synthesis of sialic acids. By catalyzing this pivotal and rate-limiting step in sialic acid biosynthesis, this enzyme assumes a pivotal role in governing the regulation of cell surface sialylation, playing a role in embryonic angiogenesis. Sialic acids represent a category of negatively charged sugars that reside on the surface of cells as terminal components of glycoconjugates and mediate important functions in various cellular processes, including cell adhesion, signal transduction, and cellular recognition. This is Bifunctional UDP-N-acetylglucosamine 2-epimerase/N-acetylmannosamine kinase from Homo sapiens (Human).